A 612-amino-acid chain; its full sequence is Dihydroxy-acid dehydratase (612 aa).

Residue D81 participates in Mg(2+) binding. C122 contacts [2Fe-2S] cluster. The Mg(2+) site is built by D123 and K124. K124 is subject to N6-carboxylysine. Position 196 (C196) interacts with [2Fe-2S] cluster. E492 provides a ligand contact to Mg(2+). Residue S518 is the Proton acceptor of the active site.

It belongs to the IlvD/Edd family. Homodimer. Requires [2Fe-2S] cluster as cofactor. It depends on Mg(2+) as a cofactor.

It carries out the reaction (2R)-2,3-dihydroxy-3-methylbutanoate = 3-methyl-2-oxobutanoate + H2O. The enzyme catalyses (2R,3R)-2,3-dihydroxy-3-methylpentanoate = (S)-3-methyl-2-oxopentanoate + H2O. The protein operates within amino-acid biosynthesis; L-isoleucine biosynthesis; L-isoleucine from 2-oxobutanoate: step 3/4. Its pathway is amino-acid biosynthesis; L-valine biosynthesis; L-valine from pyruvate: step 3/4. Functions in the biosynthesis of branched-chain amino acids. Catalyzes the dehydration of (2R,3R)-2,3-dihydroxy-3-methylpentanoate (2,3-dihydroxy-3-methylvalerate) into 2-oxo-3-methylpentanoate (2-oxo-3-methylvalerate) and of (2R)-2,3-dihydroxy-3-methylbutanoate (2,3-dihydroxyisovalerate) into 2-oxo-3-methylbutanoate (2-oxoisovalerate), the penultimate precursor to L-isoleucine and L-valine, respectively. This Paracoccus denitrificans (strain Pd 1222) protein is Dihydroxy-acid dehydratase.